Here is a 510-residue protein sequence, read N- to C-terminus: MVLLSDVVRTSAEVSATRSRKSKVAAIAGLLSRLGEAEVGPGTAFLAGELRGGRAGVGWATLSALDPAAAGEPSLTVAEVDAAIDALREIGGAGSGQRRAELLADLLARATAAEQEFLVRLLGGELRQGALEGVMLEAIAAAAGVRPDAVRRAFMLSGRLPATAEAALRGGEEELGGFRLEVGRPLRPMLASPAETLDEAMTELGEVSVEYKMDGARIQVHRDGDDVHIYTRTLREITRHVPELVELVRGLDCRSIVLDGETLALDDSGRPRPFQETMGRFGAQSPRDLLLHPYFFDCLHLDGRDLLDLPLRDRLTALEEVAADHRIPAVLTADAEHASGIFDDALEAGHEGVMVKSLDSAYAAGRRGRTWRKVKPSHTLDLVVLAAEWGHGRRSGYLSNLHLGARDPDGGPPIMVGKTFKGLTDELLAWQTEEFQRRETHRDDWTVHLVPELVVEIELDGVQTSTRYPGGVALRFARVLRYRPDKDAASADTIDAVREVRGPQRAAEGG.

Glu210 contacts ATP. Lys212 acts as the N6-AMP-lysine intermediate in catalysis. Residues Arg217, Arg232, Glu261, Phe296, Arg367, and Lys373 each coordinate ATP.

Belongs to the ATP-dependent DNA ligase family. The cofactor is Mg(2+).

It catalyses the reaction ATP + (deoxyribonucleotide)n-3'-hydroxyl + 5'-phospho-(deoxyribonucleotide)m = (deoxyribonucleotide)n+m + AMP + diphosphate.. Functionally, DNA ligase that seals nicks in double-stranded DNA during DNA replication, DNA recombination and DNA repair. In Saccharopolyspora erythraea (strain ATCC 11635 / DSM 40517 / JCM 4748 / NBRC 13426 / NCIMB 8594 / NRRL 2338), this protein is Probable DNA ligase.